We begin with the raw amino-acid sequence, 267 residues long: Mlc titration factor A (267 aa).

Zn(2+) contacts are provided by H111, H148, H152, and E211.

The protein belongs to the MtfA family. In terms of assembly, interacts with Mlc. Zn(2+) is required as a cofactor.

It localises to the cytoplasm. In terms of biological role, involved in the modulation of the activity of the glucose-phosphotransferase system (glucose-PTS). Interacts with the transcriptional repressor Mlc, preventing its interaction with DNA and leading to the modulation of expression of genes regulated by Mlc, including ptsG, which encodes the PTS system glucose-specific EIICB component. Functionally, shows zinc-dependent metallopeptidase activity. This Yersinia enterocolitica serotype O:8 / biotype 1B (strain NCTC 13174 / 8081) protein is Mlc titration factor A.